Reading from the N-terminus, the 338-residue chain is Fructose-1,6-bisphosphatase class 1 1 (338 aa).

Residues glutamate 94, aspartate 116, leucine 118, and aspartate 119 each contribute to the Mg(2+) site. Residues 119–122 (DGSS), asparagine 210, and lysine 276 contribute to the substrate site. Glutamate 282 contributes to the Mg(2+) binding site.

The protein belongs to the FBPase class 1 family. Homotetramer. Mg(2+) is required as a cofactor.

It is found in the cytoplasm. The catalysed reaction is beta-D-fructose 1,6-bisphosphate + H2O = beta-D-fructose 6-phosphate + phosphate. Its pathway is carbohydrate biosynthesis; gluconeogenesis. This is Fructose-1,6-bisphosphatase class 1 1 from Paraburkholderia xenovorans (strain LB400).